The primary structure comprises 225 residues: Small ribosomal subunit protein uS3 (225 aa).

Residues 18-87 (VDEYLAKQFY…NPQITVTSVE (70 aa)) enclose the KH type-2 domain.

The protein belongs to the universal ribosomal protein uS3 family. Part of the 30S ribosomal subunit.

Functionally, binds the lower part of the 30S subunit head. This is Small ribosomal subunit protein uS3 from Sulfurisphaera tokodaii (strain DSM 16993 / JCM 10545 / NBRC 100140 / 7) (Sulfolobus tokodaii).